We begin with the raw amino-acid sequence, 395 residues long: Cuticlin-5 (395 aa).

Positions 1-18 (MNFILAVFAIILLQAVRG) are cleaved as a signal peptide. Residues 19–358 (EIDNAIVGDP…ELCMTAIGTT (340 aa)) lie on the Extracellular side of the membrane. The ZP domain maps to 46–291 (SCVGNFIIKV…DYCDVPSCPD (246 aa)). 2 N-linked (GlcNAc...) asparagine glycosylation sites follow: Asn-90 and Asn-307. The chain crosses the membrane as a helical span at residues 359–379 (LLVFLNAFLFIISLVSIVHVC). At 380-395 (CFRTSPKLEKTKSTML) the chain is on the cytoplasmic side.

It is found in the cell membrane. Functionally, plays a role in alae formation in L1 and dauer stage larvae. This chain is Cuticlin-5, found in Caenorhabditis elegans.